A 518-amino-acid chain; its full sequence is Tyrosine/DOPA decarboxylase 1 (518 aa).

Lys321 is subject to N6-(pyridoxal phosphate)lysine.

This sequence belongs to the group II decarboxylase family. As to quaternary structure, homodimer. Requires pyridoxal 5'-phosphate as cofactor. Predominantly expressed in the roots.

The catalysed reaction is L-tyrosine + H(+) = tyramine + CO2. It carries out the reaction L-dopa + H(+) = dopamine + CO2. The enzyme catalyses 5-hydroxy-L-tryptophan + H(+) = serotonin + CO2. Its function is as follows. Marginally higher substrate specificity for L-DOPA over L-tyrosine. The protein is Tyrosine/DOPA decarboxylase 1 (TYDC1) of Papaver somniferum (Opium poppy).